The following is a 261-amino-acid chain: Carbonic anhydrase 1 (261 aa).

Positions 1–31 (MASPDWGYDDKNGPEQWSKLYPIANGNNQSP) are disordered. The residue at position 2 (alanine 2) is an N-acetylalanine. Residues 4–261 (PDWGYDDKNG…LKGRTVRASF (258 aa)) form the Alpha-carbonic anhydrase domain. Histidine 65 (proton donor/acceptor) is an active-site residue. The Zn(2+) site is built by histidine 95, histidine 97, and histidine 120. Residues threonine 200 and 200-201 (TH) each bind substrate. A disordered region spans residues 240–261 (VPMQHNNRPTQPLKGRTVRASF).

Belongs to the alpha-carbonic anhydrase family. The cofactor is Zn(2+).

It localises to the cytoplasm. The catalysed reaction is hydrogencarbonate + H(+) = CO2 + H2O. The enzyme catalyses urea = cyanamide + H2O. Inhibited by acetazolamide. Catalyzes the reversible hydration of carbon dioxide. Can hydrate cyanamide to urea. This Gorilla gorilla gorilla (Western lowland gorilla) protein is Carbonic anhydrase 1 (CA1).